Here is a 127-residue protein sequence, read N- to C-terminus: UPF0102 protein Cpha266_0037 (127 aa).

It belongs to the UPF0102 family.

In Chlorobium phaeobacteroides (strain DSM 266 / SMG 266 / 2430), this protein is UPF0102 protein Cpha266_0037.